The primary structure comprises 66 residues: Large ribosomal subunit protein uL29 (66 aa).

The protein belongs to the universal ribosomal protein uL29 family.

The chain is Large ribosomal subunit protein uL29 from Geobacillus kaustophilus (strain HTA426).